Here is a 457-residue protein sequence, read N- to C-terminus: Peptidyl-prolyl cis-trans isomerase FKBP5 (457 aa).

An N-acetylmethionine modification is found at Met1. Residues 1-11 (MTTDEGAKNSR) show a composition bias toward basic and acidic residues. The interval 1–27 (MTTDEGAKNSRENPTATVAEQGEDVTS) is disordered. The residue at position 28 (Lys28) is an N6-acetyllysine. PPIase FKBP-type domains follow at residues 50–138 (GDKV…LDFK) and 165–251 (GARV…KSFE). 3 TPR repeats span residues 268 to 301 (AAIV…LEME), 317 to 350 (LAAF…DSAN), and 351 to 384 (EKGL…NPQN). Positions 423–457 (EEANKAMSKKTSEGVTNEKLAVSHAVEEEKPEGHV) are disordered. Ser445 bears the Phosphoserine mark. A compositionally biased stretch (basic and acidic residues) spans 447–457 (AVEEEKPEGHV).

As to quaternary structure, part of a heteromultimeric cytoplasmic complex with HSP90AA1, HSPA1A/HSPA1B and steroid receptors. Upon ligand binding dissociates from the complex and FKBP4 takes its place. Interacts with functionally mature heterooligomeric progesterone receptor complexes along with HSP90 and TEBP. Interacts with NR3C1. Interacts with Akt/AKT1 and PHLPP1; enhancing dephosphorylation and subsequent activation of Akt/AKT1. Interacts with IFI44L; this interaction modulates the kinase activity of IKBKB and IKBKE. Interacts with IKBKB and IKBKE. Acetylation impairs ability to promote interaction between Akt/AKT1 and PHLPP1. Deacetylation by SIRT7 promotes interaction between Akt/AKT1 and PHLPP1, leading to suppress Akt/AKT1 activation. Post-translationally, ubiquitinated, leading to degradation in a proteasome-dependent manner. Deubiquitinated by USP49, leading to stabilization.

The protein localises to the cytoplasm. The protein resides in the nucleus. The enzyme catalyses [protein]-peptidylproline (omega=180) = [protein]-peptidylproline (omega=0). With respect to regulation, inhibited by both FK506 and rapamycin. Functionally, immunophilin protein with PPIase and co-chaperone activities. Component of unligated steroid receptors heterocomplexes through interaction with heat-shock protein 90 (HSP90). Plays a role in the intracellular trafficking of heterooligomeric forms of steroid hormone receptors maintaining the complex into the cytoplasm when unliganded. Acts as a regulator of Akt/AKT1 activity by promoting the interaction between Akt/AKT1 and PHLPP1, thereby enhancing dephosphorylation and subsequent activation of Akt/AKT1. Interacts with IKBKE and IKBKB which facilitates IKK complex assembly leading to increased IKBKE and IKBKB kinase activity, NF-kappaB activation, and IFN production. This chain is Peptidyl-prolyl cis-trans isomerase FKBP5 (FKBP5), found in Aotus nancymaae (Ma's night monkey).